The primary structure comprises 289 residues: 4-diphosphocytidyl-2-C-methyl-D-erythritol kinase (289 aa).

The active site involves Lys11. 93–103 (PLAAGLAGGSA) contacts ATP. The active site involves Asp135.

It belongs to the GHMP kinase family. IspE subfamily.

It carries out the reaction 4-CDP-2-C-methyl-D-erythritol + ATP = 4-CDP-2-C-methyl-D-erythritol 2-phosphate + ADP + H(+). Its pathway is isoprenoid biosynthesis; isopentenyl diphosphate biosynthesis via DXP pathway; isopentenyl diphosphate from 1-deoxy-D-xylulose 5-phosphate: step 3/6. Catalyzes the phosphorylation of the position 2 hydroxy group of 4-diphosphocytidyl-2C-methyl-D-erythritol. The sequence is that of 4-diphosphocytidyl-2-C-methyl-D-erythritol kinase from Thermoanaerobacter pseudethanolicus (strain ATCC 33223 / 39E) (Clostridium thermohydrosulfuricum).